The sequence spans 1136 residues: DNA-directed RNA polymerase I subunit RPA2 (1136 aa).

A disordered region spans residues 1–24 (MDPGSRWRNLPSGPSLKHLTDPSY). Position 180 (Arg-180) interacts with RNA. The interval 194-208 (VRPKWKTRGPGYTHY) is loop B. Residues 236–247 (LNFIYRKELFFL) form a loop A region. Asp-367 lines the RNA pocket. Fork loop regions lie at residues 439 to 453 (LRSK…DSGL) and 474 to 489 (RGAD…VRRL). Lys-890 is an RNA binding site. The DNA site is built by Arg-1020 and Arg-1036. Ser-1051 carries the phosphoserine modification. Zn(2+)-binding residues include Cys-1071, Cys-1074, Cys-1099, and Cys-1102. A C4-type zinc finger spans residues 1071–1102 (CVKCGSLLSPLLEKPPPSWSAMRNRKYNCTLC).

Belongs to the RNA polymerase beta chain family. In terms of assembly, component of the RNA polymerase I (Pol I) complex consisting of 13 subunits: a ten-subunit catalytic core composed of POLR1A/RPA1, POLR1B/RPA2, POLR1C/RPAC1, POLR1D/RPAC2, POLR1H/RPA12, POLR2E/RPABC1, POLR2F/RPABC2, POLR2H/RPABC3, POLR2K/RPABC4 and POLR2L/RPABC5; a mobile stalk subunit POLR1F/RPA43 protruding from the core and additional subunits homologous to general transcription factors POLR1E/RPA49 and POLR1G/RPA34. Part of Pol I pre-initiation complex (PIC), in which Pol I core assembles with RRN3 and promoter-bound UTBF and SL1/TIF-IB complex.

The protein resides in the nucleus. It is found in the nucleolus. The protein localises to the chromosome. It catalyses the reaction RNA(n) + a ribonucleoside 5'-triphosphate = RNA(n+1) + diphosphate. Its function is as follows. Catalytic core component of RNA polymerase I (Pol I), a DNA-dependent RNA polymerase which synthesizes ribosomal RNA precursors using the four ribonucleoside triphosphates as substrates. Transcribes 47S pre-rRNAs from multicopy rRNA gene clusters, giving rise to 5.8S, 18S and 28S ribosomal RNAs. Pol I-mediated transcription cycle proceeds through transcription initiation, transcription elongation and transcription termination stages. During transcription initiation, Pol I pre-initiation complex (PIC) is recruited by the selectivity factor 1 (SL1/TIF-IB) complex bound to the core promoter that precedes an rDNA repeat unit. The PIC assembly bends the promoter favoring the formation of the transcription bubble and promoter escape. Once the polymerase has escaped from the promoter it enters the elongation phase during which RNA is actively polymerized, based on complementarity with the template DNA strand. Highly processive, assembles in structures referred to as 'Miller trees' where many elongating Pol I complexes queue and transcribe the same rDNA coding regions. At terminator sequences downstream of the rDNA gene, PTRF interacts with Pol I and halts Pol I transcription leading to the release of the RNA transcript and polymerase from the DNA. Forms Pol I active center together with the largest subunit POLR1A/RPA1. Appends one nucleotide at a time to the 3' end of the nascent RNA, with POLR1A/RPA1 contributing a Mg(2+)-coordinating DxDGD motif, and POLR1B/RPA2 providing lysine residues believed to facilitate Watson-Crick base pairing between the incoming nucleotide and the template base. Typically, Mg(2+) ions direct a 5' nucleoside triphosphate to form a phosphodiester bond with the 3' hydroxyl of the preceding nucleotide of the nascent RNA, with the elimination of pyrophosphate. Has proofreading activity: Pauses and backtracks to allow the cleavage of a missincorporated nucleotide via POLR1H/RPA12. High Pol I processivity is associated with decreased transcription fidelity. The chain is DNA-directed RNA polymerase I subunit RPA2 (POLR1B) from Pongo abelii (Sumatran orangutan).